The chain runs to 128 residues: Probable 4-amino-4-deoxy-L-arabinose-phosphoundecaprenol flippase subunit ArnF (128 aa).

Residues 1-2 lie on the Cytoplasmic side of the membrane; sequence MG. Residues 3 to 23 traverse the membrane as a helical segment; sequence LMWGLFSVIIASAAQLSLGFA. Residues 24-35 are Periplasmic-facing; the sequence is ASHLPPMTHLWD. Residues 36 to 56 form a helical membrane-spanning segment; it reads FIAALLAFGLDARILLLGLLG. The Cytoplasmic portion of the chain corresponds to 57–76; it reads YLLSVFCWYKTLHKLALSKA. The helical transmembrane segment at 77-97 threads the bilayer; sequence YALLSMSYVLVWIASMILPGW. Residues 98–100 are Periplasmic-facing; sequence EGT. A helical transmembrane segment spans residues 101-121; it reads FSLKALLGVACIMSGLMLIFL. Over 122 to 128 the chain is Cytoplasmic; it reads PTTKQRY.

It belongs to the ArnF family. Heterodimer of ArnE and ArnF.

The protein localises to the cell inner membrane. The protein operates within bacterial outer membrane biogenesis; lipopolysaccharide biosynthesis. Its function is as follows. Translocates 4-amino-4-deoxy-L-arabinose-phosphoundecaprenol (alpha-L-Ara4N-phosphoundecaprenol) from the cytoplasmic to the periplasmic side of the inner membrane. The protein is Probable 4-amino-4-deoxy-L-arabinose-phosphoundecaprenol flippase subunit ArnF of Escherichia coli O17:K52:H18 (strain UMN026 / ExPEC).